Reading from the N-terminus, the 130-residue chain is Small ribosomal subunit protein uS9 (130 aa).

Residues Thr-105 to Arg-130 are disordered. Over residues Lys-111–Arg-130 the composition is skewed to basic residues.

This sequence belongs to the universal ribosomal protein uS9 family.

This Bacillus pumilus (strain SAFR-032) protein is Small ribosomal subunit protein uS9.